The chain runs to 543 residues: Zinc finger CCHC domain-containing protein 7 (543 aa).

The interval 51-71 (EEEHEEKNSGNSESSSSKPNQ) is disordered. A compositionally biased stretch (low complexity) spans 59 to 68 (SGNSESSSSK). Glycyl lysine isopeptide (Lys-Gly) (interchain with G-Cter in SUMO2) cross-links involve residues Lys131, Lys139, Lys141, Lys239, and Lys254. 3 CCHC-type zinc fingers span residues 241–258 (IICR…NCPL), 263–280 (RRCF…SCPA), and 304–321 (KQCD…ACTE). Lys339 is covalently cross-linked (Glycyl lysine isopeptide (Lys-Gly) (interchain with G-Cter in SUMO2)). The CCHC-type 4 zinc-finger motif lies at 348 to 365 (AYCYHCAQKGHYGHECPE). Residues Lys412, Lys417, and Lys435 each participate in a glycyl lysine isopeptide (Lys-Gly) (interchain with G-Cter in SUMO2) cross-link. Residues 414–543 (PYIKAANENP…FLIKQRKKKS (130 aa)) form a disordered region. Composition is skewed to basic and acidic residues over residues 441–457 (QENK…NRNW) and 465–475 (RHREVDEDFPR). Lys478 participates in a covalent cross-link: Glycyl lysine isopeptide (Lys-Gly) (interchain with G-Cter in SUMO2). The segment covering 479–491 (TYSSPGSFKTQKP) has biased composition (polar residues). Ser482 and Ser485 each carry phosphoserine. Residues Lys487, Lys490, and Lys493 each participate in a glycyl lysine isopeptide (Lys-Gly) (interchain with G-Cter in SUMO2) cross-link. The segment covering 493-502 (KPFHRSSHYH) has biased composition (basic residues). Basic and acidic residues predominate over residues 503-515 (TSREDKSPKEGKR). A Glycyl lysine isopeptide (Lys-Gly) (interchain with G-Cter in SUMO2) cross-link involves residue Lys537.

In terms of assembly, component of a nucleolar TRAMP-like complex, an ATP-dependent exosome regulatory complex consisting of a helicase (MTREX), an oligadenylate polymerase (TENT4B or TENT4A), and a substrate specific RNA-binding factor (ZCCHC7 or ZCCHC8). Several TRAMP-like complexes exist with specific compositions and are associated with nuclear, or nucleolar RNA exosomes.

The protein resides in the nucleus. It localises to the nucleolus. This chain is Zinc finger CCHC domain-containing protein 7 (ZCCHC7), found in Homo sapiens (Human).